The sequence spans 642 residues: Threonine--tRNA ligase (642 aa).

Positions methionine 1 to threonine 61 constitute a TGS domain. The catalytic stretch occupies residues aspartate 243–proline 534. Positions 334, 385, and 511 each coordinate Zn(2+).

The protein belongs to the class-II aminoacyl-tRNA synthetase family. In terms of assembly, homodimer. Requires Zn(2+) as cofactor.

Its subcellular location is the cytoplasm. It catalyses the reaction tRNA(Thr) + L-threonine + ATP = L-threonyl-tRNA(Thr) + AMP + diphosphate + H(+). Its function is as follows. Catalyzes the attachment of threonine to tRNA(Thr) in a two-step reaction: L-threonine is first activated by ATP to form Thr-AMP and then transferred to the acceptor end of tRNA(Thr). Also edits incorrectly charged L-seryl-tRNA(Thr). The chain is Threonine--tRNA ligase from Salmonella gallinarum (strain 287/91 / NCTC 13346).